A 671-amino-acid polypeptide reads, in one-letter code: Synaptotagmin-like protein 4 (671 aa).

The 119-residue stretch at Leu-4 to Gln-122 folds into the RabBD domain. The FYVE-type zinc-finger motif lies at Cys-63–Cys-105. Residues Ser-199 to Pro-243 are disordered. Phosphoserine is present on residues Ser-201, Ser-204, Ser-217, Ser-221, Ser-274, and Ser-289. Residues Val-356–Leu-478 form the C2 1 domain. A Phosphoserine modification is found at Ser-488. Positions Pro-507–Met-633 constitute a C2 2 domain.

Part of a ternary complex containing STX1A and RAB27A. Can bind both dominant negative and dominant active mutants of RAB27A. Binds STXBP1, RAB3A, RAB8A and RAB27B. Interacts with MYO5A.

Its subcellular location is the membrane. The protein resides in the cell membrane. It is found in the cytoplasmic vesicle. The protein localises to the secretory vesicle membrane. Modulates exocytosis of dense-core granules and secretion of hormones in the pancreas and the pituitary. Interacts with vesicles containing negatively charged phospholipids in a Ca(2+)-independent manner. This is Synaptotagmin-like protein 4 (SYTL4) from Homo sapiens (Human).